A 645-amino-acid polypeptide reads, in one-letter code: Translation factor GUF1 homolog, mitochondrial (645 aa).

A tr-type G domain is found at 40–215 (DKIRNFGIVA…AIIDRVPAPT (176 aa)). GTP contacts are provided by residues 49–56 (AHVDHGKS), 108–112 (DTPGH), and 162–165 (NKID).

This sequence belongs to the TRAFAC class translation factor GTPase superfamily. Classic translation factor GTPase family. LepA subfamily.

Its subcellular location is the mitochondrion inner membrane. The catalysed reaction is GTP + H2O = GDP + phosphate + H(+). Its function is as follows. Promotes mitochondrial protein synthesis. May act as a fidelity factor of the translation reaction, by catalyzing a one-codon backward translocation of tRNAs on improperly translocated ribosomes. Binds to mitochondrial ribosomes in a GTP-dependent manner. This Caenorhabditis elegans protein is Translation factor GUF1 homolog, mitochondrial.